The chain runs to 221 residues: Endonuclease V (221 aa).

The Mg(2+) site is built by Asp-38 and Asp-104.

The protein belongs to the endonuclease V family. Mg(2+) serves as cofactor.

It localises to the cytoplasm. The catalysed reaction is Endonucleolytic cleavage at apurinic or apyrimidinic sites to products with a 5'-phosphate.. DNA repair enzyme involved in the repair of deaminated bases. Selectively cleaves double-stranded DNA at the second phosphodiester bond 3' to a deoxyinosine leaving behind the intact lesion on the nicked DNA. Recognizes only deoxyinosine. The protein is Endonuclease V of Archaeoglobus fulgidus (strain ATCC 49558 / DSM 4304 / JCM 9628 / NBRC 100126 / VC-16).